A 111-amino-acid polypeptide reads, in one-letter code: Microtubule nucleation factor SSNA1 (111 aa).

Residues 6-71 (QALQNHNNEL…ARKTETKNEY (66 aa)) adopt a coiled-coil conformation.

It belongs to the SSNA1 family. Self-assembles into fibrils in a head-to-tail fashion.

It is found in the cytoplasm. The protein localises to the cytoskeleton. It localises to the flagellum basal body. Its subcellular location is the flagellum axoneme. Functionally, microtubule-binding protein which stabilizes dynamic microtubules by slowing growth and shrinkage at both plus and minus ends and serves as a sensor of microtubule damage. Induces microtubule branching which is mediated by the formation of long SSNA1 fibrils which guide microtubule protofilaments to split apart from the mother microtubule and form daughter microtubules. Required for cell division. This is Microtubule nucleation factor SSNA1 from Chlamydomonas reinhardtii (Chlamydomonas smithii).